The following is a 230-amino-acid chain: CRP-like protein Clp (230 aa).

18-139 serves as a coordination point for a nucleoside 3',5'-cyclic phosphate; sequence PSLALDAGTI…APKILYAIGV (122 aa). Positions 158 to 230 constitute an HTH crp-type domain; that stretch reads LDVTDRIVRT…GKTVVLYGTR (73 aa). Positions 190 to 209 form a DNA-binding region, H-T-H motif; the sequence is RQELARLVGCSREMAGRVLK.

In terms of assembly, homodimer.

The protein resides in the cytoplasm. Its activity is regulated as follows. Allosterically inhibited by cyclic di-GMP (c-di-GMP), which binds to Clp and abolishes its ability to bind its target gene promoter. Global transcriptional regulator that regulates virulence factors production by activating or repressing the expression of a large set of genes in diffusible signal factor (DSF) pathway. This chain is CRP-like protein Clp (clp), found in Xanthomonas oryzae pv. oryzae (strain MAFF 311018).